We begin with the raw amino-acid sequence, 73 residues long: Ferredoxin-thioredoxin reductase, variable chain (73 aa).

The interval 43–46 (NGKP) is interaction with ferredoxin.

Belongs to the ferredoxin thioredoxin reductase alpha subunit family. As to quaternary structure, heterodimer of subunit A (variable subunit) and subunit B (catalytic subunit). Heterodimeric FTR forms a complex with ferredoxin and thioredoxin.

Functionally, variable subunit of the ferredoxin-thioredoxin reductase (FTR), which catalyzes the two-electron reduction of thioredoxins by the electrons provided by reduced ferredoxin. This Synechococcus sp. (strain ATCC 27144 / PCC 6301 / SAUG 1402/1) (Anacystis nidulans) protein is Ferredoxin-thioredoxin reductase, variable chain (ftrV).